A 152-amino-acid chain; its full sequence is Small ribosomal subunit protein uS8m (152 aa).

Belongs to the universal ribosomal protein uS8 family.

It localises to the mitochondrion. This Dictyostelium citrinum (Slime mold) protein is Small ribosomal subunit protein uS8m (mrps8).